We begin with the raw amino-acid sequence, 417 residues long: NADH-quinone oxidoreductase subunit D (417 aa).

Belongs to the complex I 49 kDa subunit family. NDH-1 is composed of 14 different subunits. Subunits NuoB, C, D, E, F, and G constitute the peripheral sector of the complex.

The protein localises to the cell inner membrane. The enzyme catalyses a quinone + NADH + 5 H(+)(in) = a quinol + NAD(+) + 4 H(+)(out). NDH-1 shuttles electrons from NADH, via FMN and iron-sulfur (Fe-S) centers, to quinones in the respiratory chain. The immediate electron acceptor for the enzyme in this species is believed to be ubiquinone. Couples the redox reaction to proton translocation (for every two electrons transferred, four hydrogen ions are translocated across the cytoplasmic membrane), and thus conserves the redox energy in a proton gradient. The protein is NADH-quinone oxidoreductase subunit D of Coxiella burnetii (strain RSA 331 / Henzerling II).